A 396-amino-acid chain; its full sequence is MNLIKMSDIDLSGKRVLIREDLNVPIKDGMITSDQRLQAALPTIKSALDSGAAVIVLSHLGRPEEGKYEKKFSLEPVADYLRKNLEYPVRFVKDYLSGVDVNPGELAVCENVRFNPGEKSNDESLAKKLANLCDVFVMDAFGTAHRAQASTYGVAQYAPVAVSGPLLIRELEALNQVLKAPKKPIVAIVGGAKVSSKLSLLKQLVGMVDVLIPGGGIANTFLKAQGFEIGISLYEPDLLDEARHILILAKEKGCQIPLPTDVVVGKTFSETCPAFNKSLSNVAADDMILDIGPETIRDYVDLIHEANTIIWNGPVGVFEFPQFAYGTRAIAIAIAESNAFSIAGGGDTLAAVDLYDLNQQISYISTGGGAFLECLEGKTLPAVAILQERAKHVKTN.

Residues 21-23 (DLN), Arg36, 59-62 (HLGR), Arg113, and Arg146 contribute to the substrate site. ATP is bound by residues Lys197, Glu319, and 345-348 (GGDT).

The protein belongs to the phosphoglycerate kinase family. Monomer.

The protein localises to the cytoplasm. It catalyses the reaction (2R)-3-phosphoglycerate + ATP = (2R)-3-phospho-glyceroyl phosphate + ADP. The protein operates within carbohydrate degradation; glycolysis; pyruvate from D-glyceraldehyde 3-phosphate: step 2/5. This is Phosphoglycerate kinase from Legionella pneumophila (strain Lens).